A 325-amino-acid polypeptide reads, in one-letter code: Thiamine-monophosphate kinase (325 aa).

Mg(2+)-binding residues include Asp30, Ser45, Thr46, and Asp47. His54 provides a ligand contact to substrate. Residues Asp75 and Asp122 each contribute to the Mg(2+) site. ATP-binding positions include 121 to 122 (GD) and Arg146. Residue Asp212 coordinates Mg(2+). Ser214 contacts ATP. Asp215 lines the Mg(2+) pocket. 2 residues coordinate substrate: Glu263 and Tyr319.

Belongs to the thiamine-monophosphate kinase family.

The enzyme catalyses thiamine phosphate + ATP = thiamine diphosphate + ADP. It functions in the pathway cofactor biosynthesis; thiamine diphosphate biosynthesis; thiamine diphosphate from thiamine phosphate: step 1/1. In terms of biological role, catalyzes the ATP-dependent phosphorylation of thiamine-monophosphate (TMP) to form thiamine-pyrophosphate (TPP), the active form of vitamin B1. The sequence is that of Thiamine-monophosphate kinase from Escherichia coli O157:H7.